Here is a 183-residue protein sequence, read N- to C-terminus: Probable calcium-binding protein CML47 (183 aa).

2 EF-hand domains span residues 112–147 and 149–183; these read MGKE…LGYD and CTKM…KSFS. 9 residues coordinate Ca(2+): D125, N127, D129, E136, D162, N164, D166, K168, and E173.

In terms of biological role, potential calcium sensor. This Arabidopsis thaliana (Mouse-ear cress) protein is Probable calcium-binding protein CML47 (CML47).